The following is a 417-amino-acid chain: Serine hydroxymethyltransferase 1 (417 aa).

(6S)-5,6,7,8-tetrahydrofolate contacts are provided by residues L121 and 125–127 (GHL). Residue K230 is modified to N6-(pyridoxal phosphate)lysine. 355-357 (SPF) lines the (6S)-5,6,7,8-tetrahydrofolate pocket.

Belongs to the SHMT family. In terms of assembly, homodimer. Pyridoxal 5'-phosphate is required as a cofactor.

It is found in the cytoplasm. It catalyses the reaction (6R)-5,10-methylene-5,6,7,8-tetrahydrofolate + glycine + H2O = (6S)-5,6,7,8-tetrahydrofolate + L-serine. It functions in the pathway one-carbon metabolism; tetrahydrofolate interconversion. The protein operates within amino-acid biosynthesis; glycine biosynthesis; glycine from L-serine: step 1/1. Catalyzes the reversible interconversion of serine and glycine with tetrahydrofolate (THF) serving as the one-carbon carrier. This reaction serves as the major source of one-carbon groups required for the biosynthesis of purines, thymidylate, methionine, and other important biomolecules. Also exhibits THF-independent aldolase activity toward beta-hydroxyamino acids, producing glycine and aldehydes, via a retro-aldol mechanism. This chain is Serine hydroxymethyltransferase 1, found in Pseudomonas putida (strain ATCC 47054 / DSM 6125 / CFBP 8728 / NCIMB 11950 / KT2440).